The sequence spans 303 residues: Protoheme IX farnesyltransferase (303 aa).

8 helical membrane passes run 25-45 (MGLVQGNLIPAFAGSWLAIVL), 54-74 (IPQILLMLIGSTLIMGGACAL), 104-124 (LLILSFGMMVIGEIALFILNI), 125-145 (PSGVIGLMGIIGYVSFYSIWS), 151-171 (WNTVIGAFPGAVPPVIGWTAI), 179-199 (AIALFLVIFCWQPIHFYALAI), 228-248 (VWLILLLPLPFLLSDLGPVFI), and 280-300 (FVYSLNYLVLFFALVVIISLI).

It belongs to the UbiA prenyltransferase family. Protoheme IX farnesyltransferase subfamily. As to quaternary structure, interacts with CtaA.

Its subcellular location is the cell membrane. It carries out the reaction heme b + (2E,6E)-farnesyl diphosphate + H2O = Fe(II)-heme o + diphosphate. The protein operates within porphyrin-containing compound metabolism; heme O biosynthesis; heme O from protoheme: step 1/1. In terms of biological role, converts heme B (protoheme IX) to heme O by substitution of the vinyl group on carbon 2 of heme B porphyrin ring with a hydroxyethyl farnesyl side group. The polypeptide is Protoheme IX farnesyltransferase (Staphylococcus carnosus (strain TM300)).